We begin with the raw amino-acid sequence, 376 residues long: N6-methyladenosine RNA methyltransferase MTA1 (376 aa).

Positions 53 to 78 (TRRLISSPPPETPFVTPEPKNGPSPL) are disordered.

Belongs to the MT-A70-like family.

It catalyses the reaction an adenosine in mRNA + S-adenosyl-L-methionine = an N(6)-methyladenosine in mRNA + S-adenosyl-L-homocysteine + H(+). Its function is as follows. N6-methyladenosine RNA methyltransferase that plays a crucial role in fungal phenotypic traits, virulence, and stress tolerance. Mediates the methylation of mRNAs to produce N6-methyladenosine (m6A)-containing mRNAs. M6A is a modification present at internal sites of mRNAs and some non-coding RNAs and plays a role in mRNA stability and processing. Required for appressorium turgor pressure and regulates autophagosome formation during appressorium formation stage. Specifically, mediates the stability of ATG8 mRNA in a m6A-dependent manner via modification of the m6A site A982 located in 3'UTR region. This is N6-methyladenosine RNA methyltransferase MTA1 from Pyricularia oryzae (strain 70-15 / ATCC MYA-4617 / FGSC 8958) (Rice blast fungus).